A 441-amino-acid polypeptide reads, in one-letter code: Amino-acid acetyltransferase (441 aa).

One can recognise an N-acetyltransferase domain in the interval 295–434 (EQVRRATIND…QALYNYQRRS (140 aa)).

This sequence belongs to the acetyltransferase family. ArgA subfamily. Homohexamer.

The protein localises to the cytoplasm. It catalyses the reaction L-glutamate + acetyl-CoA = N-acetyl-L-glutamate + CoA + H(+). The protein operates within amino-acid biosynthesis; L-arginine biosynthesis; N(2)-acetyl-L-ornithine from L-glutamate: step 1/4. This chain is Amino-acid acetyltransferase, found in Serratia proteamaculans (strain 568).